The chain runs to 156 residues: Arginine repressor (156 aa).

This sequence belongs to the ArgR family.

Its subcellular location is the cytoplasm. Its pathway is amino-acid biosynthesis; L-arginine biosynthesis [regulation]. Its function is as follows. Regulates arginine biosynthesis genes. This is Arginine repressor from Salmonella paratyphi C (strain RKS4594).